The chain runs to 175 residues: Alpha-crystallin B chain (175 aa).

N-acetylmethionine is present on M1. Residues S19, S45, and S59 each carry the phosphoserine modification. Positions 56–164 (RAPSWIDTGL…PERTIPITRE (109 aa)) constitute a sHSP domain. H83 is a Zn(2+) binding site. The residue at position 92 (K92) is an N6-acetyllysine. Zn(2+) contacts are provided by H104, E106, H111, and H119. Residues 142-175 (VLTVNGPRKQASGPERTIPITREEKPAVTAAPKK) are disordered. The residue at position 166 (K166) is an N6-acetyllysine. An O-linked (GlcNAc) threonine glycan is attached at T170.

This sequence belongs to the small heat shock protein (HSP20) family. Heteromer composed of three CRYAA and one CRYAB subunits. Aggregates with homologous proteins, including the small heat shock protein HSPB1, to form large heteromeric complexes. Inter-subunit bridging via zinc ions enhances stability, which is crucial as there is no protein turn over in the lens. Interacts with HSPBAP1. Interacts with TTN/titin. Interacts with TMEM109; in the cellular response to DNA damage. Interacts with DES; binds rapidly during early stages of DES filament assembly and a reduced binding seen in the later stages. Interacts with TMED10; the interaction mediates the translocation from the cytoplasm into the ERGIC (endoplasmic reticulum-Golgi intermediate compartment) and thereby secretion. Interacts with ATP6V1A and with MTOR, forming a ternary complex. As to expression, lens as well as other tissues.

The protein resides in the cytoplasm. The protein localises to the nucleus. It is found in the secreted. It localises to the lysosome. Functionally, may contribute to the transparency and refractive index of the lens. Has chaperone-like activity, preventing aggregation of various proteins under a wide range of stress conditions. In lens epithelial cells, stabilizes the ATP6V1A protein, preventing its degradation by the proteasome. This Rattus norvegicus (Rat) protein is Alpha-crystallin B chain.